The chain runs to 150 residues: Putative biopolymer transport protein ExbB-like 2 (150 aa).

3 consecutive transmembrane segments (helical) span residues Val5–Ile25, Ala63–Gly83, and Leu97–Ile117.

This sequence belongs to the ExbB/TolQ family.

It localises to the cell inner membrane. In Helicobacter pylori (strain J99 / ATCC 700824) (Campylobacter pylori J99), this protein is Putative biopolymer transport protein ExbB-like 2.